Reading from the N-terminus, the 464-residue chain is Mitogen-activated protein kinase 10 (464 aa).

Positions 64–359 constitute a Protein kinase domain; the sequence is YQNLKPIGSG…VDDALQHPYI (296 aa). Residues 70–78 and K93 each bind ATP; that span reads IGSGAQGIV. The Proton acceptor role is filled by D189. Residue T221 is modified to Phosphothreonine; by MAP2K7. Positions 221-223 match the TXY motif; it reads TPY. Position 223 is a phosphotyrosine; by MAP2K4 (Y223). The segment at 405–464 is disordered; the sequence is TKNGVVKGQPSPSGAAVNSSESLPPSSSVNDISSMSTDQTLASDTDSSLEASAGPLGCCR. Positions 423–432 are enriched in low complexity; the sequence is SSESLPPSSS. Residues 433 to 454 are compositionally biased toward polar residues; sequence VNDISSMSTDQTLASDTDSSLE. Residues C462 and C463 are each lipidated (S-palmitoyl cysteine).

The protein belongs to the protein kinase superfamily. CMGC Ser/Thr protein kinase family. MAP kinase subfamily. As to quaternary structure, interacts with MAPK8IP1/JIP-1 and MAPK8IP3/JIP-3/JSAP1. Interacts with SPAG9/MAPK8IP4/JIP4. Interacts with HDAC9 and MAPKBP1. Interacts with ARRB2; the interaction enhances MAPK10 activation by MAP3K5. Interacts with SARM1. Interacts with JUND; interaction is inhibited in the presence of MEN1. The cofactor is Mg(2+). Dually phosphorylated on Thr-221 and Tyr-223 by MAP2K4 and MAP2K7, which activates the enzyme. MAP2K7 shows a strong preference for Thr-221 while MAP2K4 phosphorylates Tyr-223 preferentially. Weakly autophosphorylated on threonine and tyrosine residues in vitro. Post-translationally, palmitoylation regulates subcellular location and axonal development.

The protein localises to the cytoplasm. Its subcellular location is the membrane. The protein resides in the nucleus. It is found in the mitochondrion. It catalyses the reaction L-seryl-[protein] + ATP = O-phospho-L-seryl-[protein] + ADP + H(+). The catalysed reaction is L-threonyl-[protein] + ATP = O-phospho-L-threonyl-[protein] + ADP + H(+). With respect to regulation, activated by threonine and tyrosine phosphorylation by two dual specificity kinases, MAP2K4 and MAP2K7. MAP2K7 phosphorylates MAPK10 on Thr-221 causing a conformational change and a large increase in Vmax for the enzyme. MAP2K4 then phosphorylates Tyr-223 resulting in a further increase in Vmax. Inhibited by dual specificity phosphatases, such as DUSP1. Inhibited by HDAC9. Functionally, serine/threonine-protein kinase involved in various processes such as neuronal proliferation, differentiation, migration and programmed cell death. Extracellular stimuli such as pro-inflammatory cytokines or physical stress stimulate the stress-activated protein kinase/c-Jun N-terminal kinase (SAP/JNK) signaling pathway. In this cascade, two dual specificity kinases MAP2K4/MKK4 and MAP2K7/MKK7 phosphorylate and activate MAPK10/JNK3. In turn, MAPK10/JNK3 phosphorylates a number of transcription factors, primarily components of AP-1 such as JUN and ATF2 and thus regulates AP-1 transcriptional activity. Plays regulatory roles in the signaling pathways during neuronal apoptosis. Phosphorylates the neuronal microtubule regulator STMN2. Acts in the regulation of the amyloid-beta precursor protein/APP signaling during neuronal differentiation by phosphorylating APP. Also participates in neurite growth in spiral ganglion neurons. Phosphorylates the CLOCK-BMAL1 heterodimer and plays a role in the photic regulation of the circadian clock. Phosphorylates JUND and this phosphorylation is inhibited in the presence of MEN1. The polypeptide is Mitogen-activated protein kinase 10 (Mapk10) (Rattus norvegicus (Rat)).